The primary structure comprises 553 residues: Hydroxylamine reductase (553 aa).

[2Fe-2S] cluster-binding residues include cysteine 3, cysteine 6, cysteine 18, and cysteine 25. Residues histidine 252, glutamate 276, cysteine 320, cysteine 408, cysteine 436, cysteine 461, glutamate 495, and lysine 497 each coordinate hybrid [4Fe-2O-2S] cluster. Residue cysteine 408 is modified to Cysteine persulfide.

Belongs to the HCP family. It depends on [2Fe-2S] cluster as a cofactor. The cofactor is hybrid [4Fe-2O-2S] cluster.

It localises to the cytoplasm. It carries out the reaction A + NH4(+) + H2O = hydroxylamine + AH2 + H(+). Its function is as follows. Catalyzes the reduction of hydroxylamine to form NH(3) and H(2)O. In Photobacterium phosphoreum, this protein is Hydroxylamine reductase.